The primary structure comprises 2080 residues: Dysferlin (2080 aa).

The 101-residue stretch at 1 to 101 (MLRVFILYAE…LATPSLSASF (101 aa)) folds into the C2 1 domain. Over 1–2046 (MLRVFILYAE…FILWRRFRWA (2046 aa)) the chain is Cytoplasmic. Asp18, Ile19, Asp21, and Asn40 together coordinate Ca(2+). Residues 132–144 (LFPPPTPLEPSPT) are compositionally biased toward pro residues. The interval 132 to 215 (LFPPPTPLEP…APTSRKLLSD (84 aa)) is disordered. Over residues 155–172 (GGEEDTEDQGLTGDEAEP) the composition is skewed to acidic residues. At Thr166 the chain carries Phosphothreonine. Residues Thr166 and Gly167 each carry the phosphoserine modification. A phosphothreonine mark is found at Tyr197 and Pro198. C2 domains follow at residues 203–321 (KRSA…RKWL), 360–496 (DKED…EEEP), 1136–1262 (GVNR…PLTR), 1310–1438 (PPPQ…AESP), 1561–1679 (PMPP…ARCG), and 1795–1943 (GRPG…KKCS). Positions 1168, 1174, 1230, and 1232 each coordinate Ca(2+). Residues Asp1594, Asp1600, Asp1649, Asp1651, Asp1914, Ser1917, and Asp1920 each contribute to the Ca(2+) site. The disordered stretch occupies residues 1995 to 2017 (SEHEERPAGQGRDEPNMNPKLED). A helical transmembrane segment spans residues 2047 to 2067 (IILFIILFILLLFLAIFIYAF). Over 2068 to 2080 (PNYAAMKLVKPFS) the chain is Extracellular.

This sequence belongs to the ferlin family. In terms of assembly, interacts with CACNA1S. Interacts with ANXA1; the interaction is Ca(2+)- and injury state-dependent. Interacts with ANXA2; the interaction is Ca(2+)- and injury state-dependent. Interacts with CACNA1S and PARVB. Interacts with TRIM72/MG53; interaction is required for transport to sites of cell injury during repair patch formation. Interacts with RIPOR2; this interaction occurs during early myogenic differentiation. Interacts with CAV3 and PARVB. Interacts with AHNAK; the interaction is direct and Ca(2+)-independent. Interacts with AHNAK2; the interaction is direct and Ca(2+)-independent. Requires Ca(2+) as cofactor. In terms of tissue distribution, expressed in skeletal muscle, myoblast, myotube and in the syncytiotrophoblast (STB) of the placenta (at protein level). Ubiquitous. Highly expressed in skeletal muscle. Also found in heart, brain, spleen, intestine, placenta and at lower levels in liver, lung, kidney and pancreas.

It is found in the cell membrane. The protein localises to the sarcolemma. It localises to the cytoplasmic vesicle membrane. Its function is as follows. Key calcium ion sensor involved in the Ca(2+)-triggered synaptic vesicle-plasma membrane fusion. Plays a role in the sarcolemma repair mechanism of both skeletal muscle and cardiomyocytes that permits rapid resealing of membranes disrupted by mechanical stress. The sequence is that of Dysferlin (DYSF) from Homo sapiens (Human).